The chain runs to 414 residues: Transcriptional repressor protein YY1 (414 aa).

The tract at residues 1–170 (MASGDTLYIA…GGGSSSSGGG (170 aa)) is interaction with the SMAD1/SMAD4 complex. A disordered region spans residues 33 to 81 (VETIETTVVGEEEEEDDDDEDGGGGDHGGGGGHGHAGHHHHHHHHHHHP). A compositionally biased stretch (acidic residues) spans 42 to 55 (GEEEEEDDDDEDGG). Residues 57 to 66 (GDHGGGGGHG) show a composition bias toward gly residues. Positions 67–81 (HAGHHHHHHHHHHHP) are enriched in basic residues. The interval 116–260 (DDSDGLRAED…YSEYMTGKKL (145 aa)) is gly-rich region involved in interaction with HCFC1. Residue Ser-118 is modified to Phosphoserine; by CK2. A disordered region spans residues 157-203 (GKSGGGGSSSSGGGRVKKGGGKKSGKKSYLSGGAGAAGGGGADPGNK). Positions 158–170 (KSGGGGSSSSGGG) are enriched in gly residues. Residues 171–182 (RVKKGGGKKSGK) show a composition bias toward basic residues. Glycyl lysine isopeptide (Lys-Gly) (interchain with G-Cter in SUMO2) cross-links involve residues Lys-182 and Lys-183. Phosphoserine is present on Ser-187. Residues 188–199 (GGAGAAGGGGAD) are compositionally biased toward gly residues. Residues Lys-208 and Lys-230 each participate in a glycyl lysine isopeptide (Lys-Gly) (interchain with G-Cter in SUMO2) cross-link. Ser-247 is modified (phosphoserine). The interval 257 to 341 (GKKLPPGGIP…KAFVESSKLK (85 aa)) is involved in nuclear matrix association. Glycyl lysine isopeptide (Lys-Gly) (interchain with G-Cter in SUMO2) cross-links involve residues Lys-286 and Lys-288. Residues 295 to 414 (TIACPHKGCT…LTHAKAKNNQ (120 aa)) form a binding to DNA region. 3 consecutive C2H2-type zinc fingers follow at residues 296-320 (IACP…LHTH), 325-347 (HVCA…QLVH), and 353-377 (FQCT…VRIH). 12 residues coordinate Zn(2+): Cys-298, Cys-303, His-316, His-320, Cys-327, Cys-330, His-343, His-347, Cys-355, Cys-360, His-373, and His-377. The involved in repression of activated transcription stretch occupies residues 333-371 (AFVESSKLKRHQLVHTGEKPFQCTFEGCGKRFSLDFNLR). The involved in masking transactivation domain stretch occupies residues 371–397 (RTHVRIHTGDRPYVCPFDGCNKKFAQS). A Phosphothreonine modification is found at Thr-378. The segment at 383-407 (YVCPFDGCNKKFAQSTNLKSHILTH) adopts a C2H2-type 4 zinc-finger fold. Zn(2+)-binding residues include Cys-385, Cys-390, His-403, and His-407. Residues Lys-409 and Lys-411 each participate in a glycyl lysine isopeptide (Lys-Gly) (interchain with G-Cter in SUMO2) cross-link.

It belongs to the YY transcription factor family. As to quaternary structure, interacts with YAF2 through the region encompassing the first and second zinc fingers. Component of the chromatin remodeling INO80 complex; specifically part of a complex module associated with the DBINO domain of INO80. Interacts with EED and EZH2; the interactions are indicative for an association with the PRC2/EED-EZH2 complex. Interacts with SFMBT2. Found in a complex with SMAD1 and SMAD4. Found in a complex with YY1, SIN3A and HDAC1. Accessory component of the polycomb repressive deubiquitinase (PR-DUB) complex, at least composed of BAP1, one of ASXL1, ASXL2 or (probably) ASXL3 and one of MBD5 or MBD6; the PR-DUB core associates with a number of accessory proteins, including FOXK1, FOXK2, KDM1B, HCFC1, YY1 and OGT. Interacts (via Gly-rich region) with HCFC1; the interaction is direct. Interacts (via C-terminal zinc-finger domains) with BAP1 (via ULD domain); the interaction is direct and requires HCFC1. Post-translationally, phosphorylation at Ser-118 by CK2 prevents proteolytic cleavage by caspase-7 (CASP7) during apoptosis. Proteolytically cleaved by caspase-7 (CASP7) in response to apoptosis. Phosphorylation at Ser-118 protects against proteolytic cleavage. In terms of processing, transiently poly-ADP-ribosylated by PARP1 upon DNA damage, with the effect of decreasing affinity of YY1 to its cognate DNA binding sites. Post-translationally, ubiquitinated.

It localises to the nucleus matrix. Its function is as follows. Multifunctional transcription factor that exhibits positive and negative control on a large number of cellular and viral genes by binding to sites overlapping the transcription start site. Binds to the consensus sequence 5'-CCGCCATNTT-3'; some genes have been shown to contain a longer binding motif allowing enhanced binding; the initial CG dinucleotide can be methylated greatly reducing the binding affinity. The effect on transcription regulation is depending upon the context in which it binds and diverse mechanisms of action include direct activation or repression, indirect activation or repression via cofactor recruitment, or activation or repression by disruption of binding sites or conformational DNA changes. Its activity is regulated by transcription factors and cytoplasmic proteins that have been shown to abrogate or completely inhibit YY1-mediated activation or repression. For example, it acts as a repressor in absence of adenovirus E1A protein but as an activator in its presence. Acts synergistically with the SMAD1 and SMAD4 in bone morphogenetic protein (BMP)-mediated cardiac-specific gene expression. Binds to SMAD binding elements (SBEs) (5'-GTCT/AGAC-3') within BMP response element (BMPRE) of cardiac activating regions. May play an important role in development and differentiation. Proposed to recruit the PRC2/EED-EZH2 complex to target genes that are transcriptional repressed. Involved in DNA repair. In vitro, binds to DNA recombination intermediate structures (Holliday junctions). Plays a role in regulating enhancer activation. Recruits the PR-DUB complex to specific gene-regulatory regions. Proposed core component of the chromatin remodeling INO80 complex which is involved in transcriptional regulation, DNA replication and probably DNA repair; proposed to target the INO80 complex to YY1-responsive elements. The chain is Transcriptional repressor protein YY1 (YY1) from Homo sapiens (Human).